The primary structure comprises 67 residues: Small ribosomal subunit protein eS31 (67 aa).

Zn(2+) contacts are provided by C31, C34, C49, and C52. The C4-type zinc finger occupies 31–52 (CPKCGAGVFMAEHLNRFACGKC).

Belongs to the eukaryotic ribosomal protein eS31 family. In terms of assembly, part of the 30S ribosomal subunit. Zn(2+) is required as a cofactor.

This Methanococcus maripaludis (strain C7 / ATCC BAA-1331) protein is Small ribosomal subunit protein eS31.